A 122-amino-acid polypeptide reads, in one-letter code: Holo-[acyl-carrier-protein] synthase (122 aa).

D8 and E55 together coordinate Mg(2+).

The protein belongs to the P-Pant transferase superfamily. AcpS family. It depends on Mg(2+) as a cofactor.

Its subcellular location is the cytoplasm. It carries out the reaction apo-[ACP] + CoA = holo-[ACP] + adenosine 3',5'-bisphosphate + H(+). In terms of biological role, transfers the 4'-phosphopantetheine moiety from coenzyme A to a Ser of acyl-carrier-protein. In Fusobacterium nucleatum subsp. nucleatum (strain ATCC 25586 / DSM 15643 / BCRC 10681 / CIP 101130 / JCM 8532 / KCTC 2640 / LMG 13131 / VPI 4355), this protein is Holo-[acyl-carrier-protein] synthase.